Reading from the N-terminus, the 547-residue chain is Chaperonin GroEL (547 aa).

ATP contacts are provided by residues 30–33, Lys-51, 87–91, Gly-415, and Asp-496; these read TLGP and DGTTT.

Belongs to the chaperonin (HSP60) family. As to quaternary structure, forms a cylinder of 14 subunits composed of two heptameric rings stacked back-to-back. Interacts with the co-chaperonin GroES.

It localises to the cytoplasm. It carries out the reaction ATP + H2O + a folded polypeptide = ADP + phosphate + an unfolded polypeptide.. In terms of biological role, together with its co-chaperonin GroES, plays an essential role in assisting protein folding. The GroEL-GroES system forms a nano-cage that allows encapsulation of the non-native substrate proteins and provides a physical environment optimized to promote and accelerate protein folding. The chain is Chaperonin GroEL from Actinobacillus pleuropneumoniae serotype 7 (strain AP76).